The chain runs to 174 residues: Large ribosomal subunit protein uL10 (174 aa).

Belongs to the universal ribosomal protein uL10 family. As to quaternary structure, part of the ribosomal stalk of the 50S ribosomal subunit. The N-terminus interacts with L11 and the large rRNA to form the base of the stalk. The C-terminus forms an elongated spine to which L12 dimers bind in a sequential fashion forming a multimeric L10(L12)X complex.

Forms part of the ribosomal stalk, playing a central role in the interaction of the ribosome with GTP-bound translation factors. This is Large ribosomal subunit protein uL10 from Geobacter sulfurreducens (strain ATCC 51573 / DSM 12127 / PCA).